We begin with the raw amino-acid sequence, 162 residues long: Cyclic pyranopterin monophosphate synthase (162 aa).

Substrate is bound by residues 75 to 77 (LCH) and 113 to 114 (ME). Asp128 is an active-site residue.

This sequence belongs to the MoaC family. Homohexamer; trimer of dimers.

The enzyme catalyses (8S)-3',8-cyclo-7,8-dihydroguanosine 5'-triphosphate = cyclic pyranopterin phosphate + diphosphate. Its pathway is cofactor biosynthesis; molybdopterin biosynthesis. Catalyzes the conversion of (8S)-3',8-cyclo-7,8-dihydroguanosine 5'-triphosphate to cyclic pyranopterin monophosphate (cPMP). In Burkholderia cenocepacia (strain HI2424), this protein is Cyclic pyranopterin monophosphate synthase.